We begin with the raw amino-acid sequence, 379 residues long: GTP cyclohydrolase 1 type 2 homolog (379 aa).

5 residues coordinate a divalent metal cation: His-64, His-65, Asp-103, His-333, and Glu-337.

This sequence belongs to the GTP cyclohydrolase I type 2/NIF3 family. Homohexamer.

The sequence is that of GTP cyclohydrolase 1 type 2 homolog from Mycobacterium bovis (strain ATCC BAA-935 / AF2122/97).